Consider the following 311-residue polypeptide: Endosome-associated-trafficking regulator 1 (311 aa).

A coiled-coil region spans residues 167–278; it reads RGNAENGTKN…KSENERLRLG (112 aa).

This sequence belongs to the ENTR1 family.

It is found in the cytoplasm. The protein localises to the early endosome. It localises to the endosome. The protein resides in the recycling endosome. Its subcellular location is the midbody. It is found in the cytoskeleton. The protein localises to the microtubule organizing center. It localises to the centrosome. The protein resides in the cilium basal body. Its function is as follows. Endosome-associated protein that plays a role in membrane receptor sorting, cytokinesis and ciliogenesis. This is Endosome-associated-trafficking regulator 1 from Danio rerio (Zebrafish).